We begin with the raw amino-acid sequence, 485 residues long: Peroxisomal catalase (485 aa).

Active-site residues include H53 and N126. Y336 lines the heme pocket.

The protein belongs to the catalase family. Homotetramer. Requires heme as cofactor.

The protein localises to the peroxisome matrix. The enzyme catalyses 2 H2O2 = O2 + 2 H2O. Functionally, catalyzes the degradation of hydrogen peroxide (H(2)O(2)) generated by peroxisomal oxidases to water and oxygen, thereby protecting cells from the toxic effects of hydrogen peroxide. The chain is Peroxisomal catalase (CAT1) from Candida albicans (strain SC5314 / ATCC MYA-2876) (Yeast).